The sequence spans 58 residues: Small ribosomal subunit protein bS21 (58 aa).

Belongs to the bacterial ribosomal protein bS21 family.

This Prochlorococcus marinus (strain MIT 9301) protein is Small ribosomal subunit protein bS21.